Reading from the N-terminus, the 89-residue chain is Antitoxin RelB (89 aa).

This sequence belongs to the phD/YefM antitoxin family. In terms of assembly, interacts with toxin RelE, which neutralizes its toxicity. Also interacts with toxins RelG and RelK in vitro, in M.smegmatis coexpression with non-cognate toxins neutralizes the toxicity of RelG while increasing the toxicity of RelK.

Its function is as follows. Antitoxin component of a type II toxin-antitoxin (TA) system. Upon expression in M.smegmatis neutralizes the effect of toxin RelE. Functionally, induces its own promoter, in combination with RelE represses its own promoter. Binds DNA in complex with toxin RelE but not alone. The sequence is that of Antitoxin RelB (relB) from Mycobacterium tuberculosis (strain ATCC 25618 / H37Rv).